We begin with the raw amino-acid sequence, 299 residues long: Oxygen-dependent coproporphyrinogen-III oxidase (299 aa).

A substrate-binding site is contributed by Ser-92. A divalent metal cation contacts are provided by His-96 and His-106. The active-site Proton donor is the His-106. Substrate is bound at residue 108–110 (NVR). A divalent metal cation-binding residues include His-145 and His-175. The tract at residues 239-274 (YVEFNLVYDRGTLFGLQSGGRAESILMSLPPRVRWE) is important for dimerization. Residue 257–259 (GGR) participates in substrate binding.

Belongs to the aerobic coproporphyrinogen-III oxidase family. Homodimer. Requires a divalent metal cation as cofactor.

The protein resides in the cytoplasm. It catalyses the reaction coproporphyrinogen III + O2 + 2 H(+) = protoporphyrinogen IX + 2 CO2 + 2 H2O. It participates in porphyrin-containing compound metabolism; protoporphyrin-IX biosynthesis; protoporphyrinogen-IX from coproporphyrinogen-III (O2 route): step 1/1. In terms of biological role, involved in the heme biosynthesis. Catalyzes the aerobic oxidative decarboxylation of propionate groups of rings A and B of coproporphyrinogen-III to yield the vinyl groups in protoporphyrinogen-IX. The protein is Oxygen-dependent coproporphyrinogen-III oxidase of Xanthomonas oryzae pv. oryzae (strain MAFF 311018).